A 348-amino-acid polypeptide reads, in one-letter code: Fructose-1,6-bisphosphatase class 1 (348 aa).

4 residues coordinate Mg(2+): Glu92, Asp111, Leu113, and Asp114. Residues 114-117 and Asn204 each bind substrate; that span reads DGSS. Glu276 contributes to the Mg(2+) binding site.

Belongs to the FBPase class 1 family. Homotetramer. The cofactor is Mg(2+).

It localises to the cytoplasm. It catalyses the reaction beta-D-fructose 1,6-bisphosphate + H2O = beta-D-fructose 6-phosphate + phosphate. It participates in carbohydrate biosynthesis; gluconeogenesis. The protein is Fructose-1,6-bisphosphatase class 1 of Methylorubrum extorquens (strain CM4 / NCIMB 13688) (Methylobacterium extorquens).